The chain runs to 78 residues: Cytochrome c oxidase subunit 6b-2 (78 aa).

One can recognise a CHCH domain in the interval 22–65 (TRHCFTRYIEFHRCTTAKGEESNDCERFAKYYRALCPGEWVDKW). Positions 25-35 (CFTRYIEFHRC) match the Cx9C motif motif. 2 disulfide bridges follow: Cys25–Cys57 and Cys35–Cys46. The short motif at 46–57 (CERFAKYYRALC) is the Cx10C motif element.

This sequence belongs to the cytochrome c oxidase subunit 6B (TC 3.D.4.8) family. As to expression, specifically expressed in roots.

The protein resides in the mitochondrion. In terms of biological role, this protein is one of the nuclear-coded polypeptide chains of cytochrome c oxidase, the terminal oxidase in mitochondrial electron transport. This protein may be one of the heme-binding subunits of the oxidase. This Arabidopsis thaliana (Mouse-ear cress) protein is Cytochrome c oxidase subunit 6b-2 (COX6B-2).